A 3375-amino-acid chain; its full sequence is Basement membrane proteoglycan (3375 aa).

An N-terminal signal peptide occupies residues Met-1–Ala-22. Positions Val-45 to Ser-130 constitute an Ig-like C2-type 1 domain. 11 cysteine pairs are disulfide-bonded: Cys-66–Cys-114, Cys-149–Cys-161, Cys-156–Cys-174, Cys-168–Cys-183, Cys-190–Cys-202, Cys-197–Cys-215, Cys-209–Cys-224, Cys-233–Cys-246, Cys-240–Cys-259, Cys-253–Cys-268, and Cys-293–Cys-344. 3 LDL-receptor class A domains span residues Gln-148–Pro-184, Thr-189–Asn-225, and Asp-232–Val-269. One can recognise an Ig-like C2-type 2 domain in the interval Pro-271–Ala-355. The interval Val-364–Asp-385 is disordered. Residues Pro-369–Pro-378 show a composition bias toward pro residues. Cystine bridges form between Cys-384-Cys-400, Cys-402-Cys-411, and Cys-414-Cys-429. Positions Cys-384–Lys-431 constitute a Laminin EGF-like 1; truncated domain. One can recognise a Laminin EGF-like 2; first part domain in the interval Cys-432–Cys-441. The 184-residue stretch at Lys-450 to Gln-633 folds into the Laminin IV type A 1 domain. Cystine bridges form between Cys-634/Cys-648, Cys-636/Cys-689, Cys-691/Cys-700, and Cys-703/Cys-718. The 33-residue stretch at Cys-634–Pro-666 folds into the Laminin EGF-like 2; second part domain. Positions Cys-674–Pro-720 constitute a Laminin EGF-like 3; truncated domain. The 10-residue stretch at Cys-721–Cys-730 folds into the Laminin EGF-like 4; first part domain. In terms of domain architecture, Laminin IV type A 2 spans Val-740–Gln-921. Residues Cys-922–Lys-954 enclose the Laminin EGF-like 4; second part domain. Disulfide bonds link Cys-955/Cys-964, Cys-957/Cys-971, Cys-974/Cys-983, Cys-986/Cys-1002, Cys-1011/Cys-1021, Cys-1013/Cys-1027, Cys-1030/Cys-1039, Cys-1042/Cys-1058, Cys-1061/Cys-1069, Cys-1063/Cys-1079, Cys-1082/Cys-1091, Cys-1094/Cys-1109, Cys-1152/Cys-1200, Cys-1247/Cys-1294, and Cys-1338/Cys-1384. 3 Laminin EGF-like domains span residues Cys-955–Pro-1004, Cys-1011–Pro-1060, and Cys-1061–Pro-1111. Ig-like C2-type domains lie at Pro-1126 to Ser-1222, Pro-1226 to Glu-1311, Pro-1319 to Gln-1401, Pro-1410 to Asn-1499, Pro-1503 to Glu-1585, Pro-1588 to Thr-1680, Pro-1690 to Asn-1785, Pro-1793 to Glu-1878, Pro-1886 to Asn-1970, Pro-1973 to Glu-2069, Pro-2073 to Val-2163, Pro-2173 to Ser-2260, Gln-2263 to Thr-2343, Pro-2349 to Leu-2435, and Thr-2446 to Gln-2530. Residues Asp-1388–Val-1400 show a composition bias toward polar residues. 2 disordered regions span residues Asp-1388–Asn-1426 and Glu-1478–Arg-1497. Asn-1422 carries an N-linked (GlcNAc...) asparagine glycan. 4 disulfide bridges follow: Cys-1435–Cys-1481, Cys-1527–Cys-1573, Cys-1618–Cys-1663, and Cys-1719–Cys-1767. The segment covering Cys-1481–Arg-1497 has biased composition (polar residues). Residues Asn-1773 to Pro-1792 are disordered. Polar residues predominate over residues Pro-1776–Pro-1788. Disulfide bonds link Cys-1814–Cys-1861, Cys-1907–Cys-1954, Cys-1998–Cys-2053, Cys-2099–Cys-2147, Cys-2195–Cys-2242, Cys-2284–Cys-2329, Cys-2374–Cys-2420, Cys-2467–Cys-2514, Cys-2713–Cys-2725, Cys-2719–Cys-2736, Cys-2738–Cys-2747, Cys-2754–Cys-2764, Cys-2759–Cys-2773, Cys-2775–Cys-2784, and Cys-2935–Cys-2960. The tract at residues Thr-1880–Thr-1918 is disordered. Positions Cys-1907–Thr-1918 are enriched in polar residues. Asn-2476 carries an N-linked (GlcNAc...) asparagine glycan. Residues Asp-2532 to Cys-2713 enclose the Laminin G-like 1 domain. The 168-residue stretch at Pro-2793–Cys-2960 folds into the Laminin G-like 2 domain. N-linked (GlcNAc...) asparagine glycosylation is present at Asn-2950. The span at Ser-2952–Ser-2963 shows a compositional bias: low complexity. The segment at Ser-2952 to Glu-3124 is disordered. Acidic residues-rich tracts occupy residues Glu-2979 to Thr-2990 and Pro-2999 to Thr-3010. Positions Thr-3011–Glu-3033 are enriched in low complexity. Basic and acidic residues predominate over residues Glu-3034–Asp-3044. Over residues Ile-3049–Thr-3079 the composition is skewed to low complexity. Residues Pro-3081–Ile-3094 show a composition bias toward acidic residues. 4 disulfide bridges follow: Cys-3141-Cys-3152, Cys-3146-Cys-3162, Cys-3164-Cys-3173, and Cys-3333-Cys-3359. N-linked (GlcNAc...) asparagine glycans are attached at residues Asn-3143 and Asn-3156. The Laminin G-like 3 domain occupies Glu-3180–Cys-3359.

As to quaternary structure, component of an integrin containing attachment complex, composed of at least pat-2, pat-3, pat-4, pat-6, unc-52, unc-97 and unc-112. As to expression, detected on embryonic and adult body wall muscle cells (at protein level). Found in the basement membrane of all contractile tissues (at protein level). Expressed in gonadal sheath cells and spermatheca.

It is found in the secreted. The protein resides in the extracellular space. The protein localises to the extracellular matrix. Its subcellular location is the basement membrane. It localises to the cytoplasm. It is found in the myofibril. The protein resides in the sarcomere. The protein localises to the m line. Functionally, component of an integrin containing attachment complex, which is required for muscle development and maintenance. Probable structural role in myofilament assembly and/or attachment of the myofilament lattice to the cell membrane. May be an extracellular anchor for integrin receptors in body wall muscles and myoepithelial sheath cells. During the formation of neuromuscular junctions at the larval stage, negatively regulates membrane protrusion from body wall muscles, probably downstream of the integrin complex formed by pat-2 and pat-3. Involved in ovulation. Required for normal lifespan. This is Basement membrane proteoglycan from Caenorhabditis elegans.